The chain runs to 34 residues: Phalloidin proprotein (34 aa).

Residues methionine 1–proline 10 constitute a propeptide that is removed on maturation. Residues alanine 11 to proline 17 constitute a cross-link (cyclopeptide (Ala-Pro)). The 2'-cysteinyl-6'-hydroxytryptophan sulfoxide (Trp-Cys) cross-link spans tryptophan 12–cysteine 16. A propeptide spanning residues cysteine 18–cysteine 34 is cleaved from the precursor.

It belongs to the MSDIN fungal toxin family. In terms of processing, processed by the macrocyclase-peptidase enzyme POPB to yield a toxic cyclic heptapeptide. POPB first removes 10 residues from the N-terminus. Conformational trapping of the remaining peptide forces the enzyme to release this intermediate rather than proceed to macrocyclization. The enzyme rebinds the remaining peptide in a different conformation and catalyzes macrocyclization of the N-terminal 7 residues.

Its function is as follows. Toxin that belongs to the bicyclic heptapeptides called phallotoxins. Although structurally related to amatoxins, phallotoxins have a different mode of action, which is the stabilization of F-actin. Phallotoxins are poisonous when administered parenterally, but not orally because of poor absorption. The polypeptide is Phalloidin proprotein (Amanita phalloides (Death cap)).